The following is a 596-amino-acid chain: Aspartate--tRNA(Asp/Asn) ligase (596 aa).

L-aspartate is bound at residue Glu173. Residues 197–200 (QLFK) form an aspartate region. Arg219 contacts L-aspartate. ATP-binding positions include 219–221 (RDE) and Gln228. Residue His450 coordinates L-aspartate. Residue Glu485 participates in ATP binding. Arg492 is a binding site for L-aspartate. Position 537 to 540 (537 to 540 (GLDR)) interacts with ATP.

This sequence belongs to the class-II aminoacyl-tRNA synthetase family. Type 1 subfamily. As to quaternary structure, homodimer.

It localises to the cytoplasm. The catalysed reaction is tRNA(Asx) + L-aspartate + ATP = L-aspartyl-tRNA(Asx) + AMP + diphosphate. In terms of biological role, aspartyl-tRNA synthetase with relaxed tRNA specificity since it is able to aspartylate not only its cognate tRNA(Asp) but also tRNA(Asn). Reaction proceeds in two steps: L-aspartate is first activated by ATP to form Asp-AMP and then transferred to the acceptor end of tRNA(Asp/Asn). The polypeptide is Aspartate--tRNA(Asp/Asn) ligase (Hydrogenovibrio crunogenus (strain DSM 25203 / XCL-2) (Thiomicrospira crunogena)).